The sequence spans 310 residues: Ribosomal protein uL3 glutamine methyltransferase (310 aa).

This sequence belongs to the protein N5-glutamine methyltransferase family. PrmB subfamily.

The catalysed reaction is L-glutaminyl-[ribosomal protein uL3] + S-adenosyl-L-methionine = N(5)-methyl-L-glutaminyl-[ribosomal protein uL3] + S-adenosyl-L-homocysteine + H(+). Methylates large ribosomal subunit protein uL3 on a specific glutamine residue. In Vibrio anguillarum (strain ATCC 68554 / 775) (Listonella anguillarum), this protein is Ribosomal protein uL3 glutamine methyltransferase.